A 368-amino-acid polypeptide reads, in one-letter code: Glutamyl-tRNA reductase (368 aa).

Substrate is bound by residues 43–46 (TCHR), S89, 94–96 (EHQ), and Q100. The Nucleophile role is filled by C44. 164 to 169 (GTGMMG) provides a ligand contact to NADP(+).

This sequence belongs to the glutamyl-tRNA reductase family. In terms of assembly, homodimer.

It catalyses the reaction (S)-4-amino-5-oxopentanoate + tRNA(Glu) + NADP(+) = L-glutamyl-tRNA(Glu) + NADPH + H(+). The protein operates within porphyrin-containing compound metabolism; protoporphyrin-IX biosynthesis; 5-aminolevulinate from L-glutamyl-tRNA(Glu): step 1/2. Functionally, catalyzes the NADPH-dependent reduction of glutamyl-tRNA(Glu) to glutamate 1-semialdehyde (GSA). The polypeptide is Glutamyl-tRNA reductase (Thermosipho melanesiensis (strain DSM 12029 / CIP 104789 / BI429)).